The sequence spans 718 residues: MSRGYSENNNFLNNNNQMVLDMILYPLIGIPQTINWETIARLVPGLTPKECAKRFDELKSSGSSPVDNQYNSLMAAGESPVETLATYIKSSLLDIHGEFQETPVGHDAVSKTGRHSIASTRNCSSESENCTTHNGGEMTEESEGPNMVIHVCDEAKNLKEDFTCPRDLLISEMKYFAEYLSMDAQRWEEVDISVHCDVHIFNWLIKYIKRNTKENKDCEMPTLEPGNVISILISSEFLKMDSLVEQCIQYCHKNMNAIVATPCNMNCINANLLTRIADLFSHNEVDDLKDKKDKFKSKLFCKKIERLFDPEYLNPDSRSNAATLYRCCLCKKLLTKETERRIPCIPGKINVDRRGNIVYIHIRDKTWDVHEYLNSLFEELKSWRDVYWRLWGTINWLTCSRCYQAFLCIEFSHCQYHSETVVYPTAASSLNTVGTGIYPCCNQKVLRFDPTQLTKGCKVRDHMVTLRDQGEGGDLPSCPTARMLDDLHKYRDVIVVPFSKDTVSDVGVGLCDEKGIECDVLLEPNTPWGPKTGELNAFLSLKNWTLQLKQQSLFSEEEEYTTGSEVTEDEVGDEEEVSKKQRKKEKPKKFTRQPKKQVSSPCAQRKEKALEKSASRDVSPFVMSMQKNKWDATRSLRFNQDAQREDDQRRMTEITGHLIKMRLGDLDRVKSKEAKEFAGGIYSRLEAQIKASVPVSARQSSSEKNTRSKSRFGQGRPA.

An SANT domain is found at 21-59 (DMILYPLIGIPQTINWETIARLVPGLTPKECAKRFDELK). A compositionally biased stretch (polar residues) spans 118–134 (ASTRNCSSESENCTTHN). Positions 118-142 (ASTRNCSSESENCTTHNGGEMTEES) are disordered. Residues 147–255 (MVIHVCDEAK…QCIQYCHKNM (109 aa)) enclose the BTB domain. Positions 555–576 (SEEEEYTTGSEVTEDEVGDEEE) are enriched in acidic residues. 2 disordered regions span residues 555–622 (SEEE…SPFV) and 692–718 (SVPV…GRPA). The span at 580–595 (KQRKKEKPKKFTRQPK) shows a compositional bias: basic residues. Over residues 604-615 (QRKEKALEKSAS) the composition is skewed to basic and acidic residues.

The protein belongs to the KIAA1841 family. In terms of assembly, homodimer. Interacts (via the BTB domain) with HDAC1 and NCOR2.

In terms of biological role, negatively regulates class switch recombination or isotype switching in splenic B-cells. The polypeptide is SANT and BTB domain regulator of class switch recombination (Homo sapiens (Human)).